The primary structure comprises 152 residues: Transcriptional repressor NrdR (152 aa).

Residues 3 to 34 (CPYCQHPDSDVIDTRKLHNGETIRRRRKCEAC) fold into a zinc finger. The ATP-cone domain maps to 49 to 139 (ITVVKKNGER…VYRSFADIGK (91 aa)).

It belongs to the NrdR family. It depends on Zn(2+) as a cofactor.

Its function is as follows. Negatively regulates transcription of bacterial ribonucleotide reductase nrd genes and operons by binding to NrdR-boxes. The chain is Transcriptional repressor NrdR from Roseiflexus castenholzii (strain DSM 13941 / HLO8).